We begin with the raw amino-acid sequence, 108 residues long: UPF0060 membrane protein Sca_1835 (108 aa).

A run of 4 helical transmembrane segments spans residues Ile-5 to Trp-25, Phe-34 to Phe-54, Val-60 to Asp-80, and Pro-84 to Leu-104.

Belongs to the UPF0060 family.

It localises to the cell membrane. The polypeptide is UPF0060 membrane protein Sca_1835 (Staphylococcus carnosus (strain TM300)).